The sequence spans 267 residues: MQEFTNPFPIGSSSLIHCITNEISCEMLANGILALGCKPVMADDSREVLDFTKQSQALFINLGHLSAEKEKAIRMAASYANQSSLPMVVDAVGVTTSSIRKSLVKDLLDYRPTVLKGNMSEIRSLVGLKHHGVGVDASAKDQETEDLLQVLKDWCQTYPGMSFLVTGPKDLVVSKNQVAVLGNGCTELDWITGTGDLVGALTAVFLSQGKTGFEASCLAVSYLNIAAEKIVVQGMGLEEFRYQVLNQLSLLRRDENWLDTIKGEVYE.

Position 41 (methionine 41) interacts with substrate. ATP-binding residues include lysine 116 and threonine 166. Position 193 (glycine 193) interacts with substrate.

Belongs to the Thz kinase family. It depends on Mg(2+) as a cofactor.

It catalyses the reaction 5-(2-hydroxyethyl)-4-methylthiazole + ATP = 4-methyl-5-(2-phosphooxyethyl)-thiazole + ADP + H(+). The protein operates within cofactor biosynthesis; thiamine diphosphate biosynthesis; 4-methyl-5-(2-phosphoethyl)-thiazole from 5-(2-hydroxyethyl)-4-methylthiazole: step 1/1. Functionally, catalyzes the phosphorylation of the hydroxyl group of 4-methyl-5-beta-hydroxyethylthiazole (THZ). The sequence is that of Hydroxyethylthiazole kinase 2 from Streptococcus pneumoniae serotype 4 (strain ATCC BAA-334 / TIGR4).